Consider the following 386-residue polypeptide: GTPase Obg (386 aa).

One can recognise an Obg domain in the interval 1 to 159; it reads MKFVDEAKIK…RNLLLELLLL (159 aa). An OBG-type G domain is found at 160-333; it reads ADVGMLGLPN…LCRDVVEYLE (174 aa). GTP-binding positions include 166–173, 191–195, 213–216, 283–286, and 314–316; these read GLPNAGKS, FTTLV, DIPG, NKTD, and AAI. Mg(2+) is bound by residues Ser-173 and Thr-193.

Belongs to the TRAFAC class OBG-HflX-like GTPase superfamily. OBG GTPase family. Monomer. Requires Mg(2+) as cofactor.

It is found in the cytoplasm. Functionally, an essential GTPase which binds GTP, GDP and possibly (p)ppGpp with moderate affinity, with high nucleotide exchange rates and a fairly low GTP hydrolysis rate. Plays a role in control of the cell cycle, stress response, ribosome biogenesis and in those bacteria that undergo differentiation, in morphogenesis control. The sequence is that of GTPase Obg from Psychromonas ingrahamii (strain DSM 17664 / CCUG 51855 / 37).